Here is a 228-residue protein sequence, read N- to C-terminus: UPF0173 metal-dependent hydrolase ABC2731 (228 aa).

The protein belongs to the UPF0173 family.

The protein is UPF0173 metal-dependent hydrolase ABC2731 of Shouchella clausii (strain KSM-K16) (Alkalihalobacillus clausii).